A 258-amino-acid chain; its full sequence is E3 ubiquitin ligase TRIM40 (258 aa).

The RING-type zinc-finger motif lies at 14–56 (CPICQESLKEAVSTNCGHLFCRVCLTQHVEKASASGVFCCPLC). The B box-type zinc-finger motif lies at 66–107 (GTGYICPNHQKRVCRFCEESRLLLCVECLVSPEHMSHHELTI). Zn(2+) contacts are provided by C71, H74, C93, and H99. Residues 107–159 (IENALSHYKERLNRRSRKLRKDIAELQRLKAQQEKKLQALQFQVDHGNHRLEA) are a coiled coil.

Belongs to the TRIM/RBCC family. Interacts with NEDD8. In terms of tissue distribution, highly expressed in normal gastrointestinal epithelia but that is down-regulated in gastrointestinal carcinomas and chronic inflammatory lesions of the gastrointestinal tract.

It carries out the reaction S-ubiquitinyl-[E2 ubiquitin-conjugating enzyme]-L-cysteine + [acceptor protein]-L-lysine = [E2 ubiquitin-conjugating enzyme]-L-cysteine + N(6)-ubiquitinyl-[acceptor protein]-L-lysine.. Its function is as follows. E3 ubiquitin-protein ligase that plays a role in the limitation of the innate immune response. Mediates inhibition of the RLR signaling pathway by ubiquitinating RIGI and IFIH1 receptors, leading to their proteasomal degradation. Also promotes the neddylation of IKBKG/NEMO, stabilizing NFKBIA, and thereby inhibiting of NF-kappa-B nuclear translocation and activation. The protein is E3 ubiquitin ligase TRIM40 (TRIM40) of Homo sapiens (Human).